We begin with the raw amino-acid sequence, 1380 residues long: Protein TORNADO 1 (1380 aa).

10 LRR repeats span residues 26 to 46 (FFNL…CQLI), 47 to 70 (TESS…FIEL), 105 to 132 (TSKI…ILKR), 161 to 184 (NDSL…ELSR), 266 to 289 (NTTV…EFRW), 299 to 322 (EVKL…LFKN), 323 to 346 (KSLQ…LLCP), 348 to 371 (SRFS…GSNT), 446 to 472 (INPL…IYQK), and 476 to 502 (NGRK…SVRA). Positions 493 to 702 (PLTEPKSVRA…HHIRMTSKAI (210 aa)) constitute a Roc domain. GTP-binding positions include 506–513 (GQNYAGKT) and 567–571 (NLAGQ). Residues 574–594 (FFALHDLMFPSPCFFLIVLSL) form a helical membrane-spanning segment. 6 LRR repeats span residues 640-665 (LTHS…RLRD), 688-712 (VSKL…VYQL), 799-826 (LTQL…ELEK), 1023-1046 (QSQF…TMYD), 1131-1154 (EAVL…IQGL), and 1229-1254 (QLGC…NFMK). GTP is bound at residue 641 to 644 (THSE). The region spanning 757–931 (NIQIVETRRH…LQVHLHNRIM (175 aa)) is the COR domain. 2 consecutive transmembrane segments (helical) span residues 1255–1275 (LVTF…HMIP) and 1287–1307 (PAVM…AALG).

In terms of tissue distribution, expressed in seedlings, roots, leaves, stems and flowers. Present in ovules, prominently in nucellus and integuments.

It localises to the membrane. Functionally, involved in the basipetal transport of auxin (IAA) that modulates growth and organs organization. Required for initial divisions in the epidermal/lateral root cap leading to the formation of epidermal cells and a clone of lateral root cap cells, as well as for the maintenance of the radial pattern of cell specification in the root, thus regulating the distinction between the lateral root cap and epidermis. The sequence is that of Protein TORNADO 1 (TRN1) from Arabidopsis thaliana (Mouse-ear cress).